Consider the following 76-residue polypeptide: Protein CYSTEINE-RICH TRANSMEMBRANE MODULE 11 (76 aa).

The tract at residues Gly-19–Arg-45 is disordered. The chain crosses the membrane as a helical span at residues Val-47–Val-63.

This sequence belongs to the CYSTM1 family. In terms of assembly, heterodimers. Interacts with CYSTM6, CYSTM7 and WIH1/CYSTM13. In terms of tissue distribution, mostly expressed in stems, siliques, leaves and flowers and, to a lower extent, in roots.

Its subcellular location is the cell membrane. The protein localises to the cytoplasm. Functionally, involved in resistance to abiotic stress. The chain is Protein CYSTEINE-RICH TRANSMEMBRANE MODULE 11 from Arabidopsis thaliana (Mouse-ear cress).